The chain runs to 427 residues: Serine hydroxymethyltransferase (427 aa).

Residues leucine 122 and 126–128 (GHL) contribute to the (6S)-5,6,7,8-tetrahydrofolate site. Lysine 231 is subject to N6-(pyridoxal phosphate)lysine. (6S)-5,6,7,8-tetrahydrofolate-binding positions include glutamate 247 and 355 to 357 (SPF).

This sequence belongs to the SHMT family. In terms of assembly, homodimer. Pyridoxal 5'-phosphate serves as cofactor.

The protein localises to the cytoplasm. The catalysed reaction is (6R)-5,10-methylene-5,6,7,8-tetrahydrofolate + glycine + H2O = (6S)-5,6,7,8-tetrahydrofolate + L-serine. It participates in one-carbon metabolism; tetrahydrofolate interconversion. The protein operates within amino-acid biosynthesis; glycine biosynthesis; glycine from L-serine: step 1/1. Its function is as follows. Catalyzes the reversible interconversion of serine and glycine with tetrahydrofolate (THF) serving as the one-carbon carrier. This reaction serves as the major source of one-carbon groups required for the biosynthesis of purines, thymidylate, methionine, and other important biomolecules. Also exhibits THF-independent aldolase activity toward beta-hydroxyamino acids, producing glycine and aldehydes, via a retro-aldol mechanism. This chain is Serine hydroxymethyltransferase, found in Synechocystis sp. (strain ATCC 27184 / PCC 6803 / Kazusa).